A 93-amino-acid chain; its full sequence is DNA-directed RNA polymerase subunit omega (93 aa).

It belongs to the RNA polymerase subunit omega family. As to quaternary structure, the RNAP catalytic core consists of 2 alpha, 1 beta, 1 beta' and 1 omega subunit. When a sigma factor is associated with the core the holoenzyme is formed, which can initiate transcription.

It catalyses the reaction RNA(n) + a ribonucleoside 5'-triphosphate = RNA(n+1) + diphosphate. In terms of biological role, promotes RNA polymerase assembly. Latches the N- and C-terminal regions of the beta' subunit thereby facilitating its interaction with the beta and alpha subunits. This chain is DNA-directed RNA polymerase subunit omega, found in Shewanella loihica (strain ATCC BAA-1088 / PV-4).